Consider the following 584-residue polypeptide: Glutathione hydrolase proenzyme (584 aa).

The signal sequence occupies residues 1-25 (MAPAAMNLLCTVLYLLSSFAQVSDA). A glycan (N-linked (GlcNAc...) asparagine) is linked at asparagine 111. Arginine 120 serves as a coordination point for L-glutamate. N-linked (GlcNAc...) asparagine glycosylation is found at asparagine 135, asparagine 262, asparagine 272, asparagine 350, and asparagine 370. The Nucleophile role is filled by threonine 395. L-glutamate contacts are provided by residues threonine 413, glutamate 434, and 465-466 (SS). The N-linked (GlcNAc...) asparagine glycan is linked to asparagine 547.

It belongs to the gamma-glutamyltransferase family. Heterodimer composed of the light and heavy chains. The active site is located in the light chain. Cleaved by autocatalysis into a large and a small subunit and the autocatalytic cleavage is essential to the functional activation of the enzyme.

It localises to the secreted. It catalyses the reaction an N-terminal (5-L-glutamyl)-[peptide] + an alpha-amino acid = 5-L-glutamyl amino acid + an N-terminal L-alpha-aminoacyl-[peptide]. It carries out the reaction glutathione + H2O = L-cysteinylglycine + L-glutamate. The enzyme catalyses an S-substituted glutathione + H2O = an S-substituted L-cysteinylglycine + L-glutamate. The catalysed reaction is leukotriene C4 + H2O = leukotriene D4 + L-glutamate. Its pathway is sulfur metabolism; glutathione metabolism. Cleaves the gamma-glutamyl bond of extracellular glutathione (gamma-Glu-Cys-Gly), glutathione conjugates, and other gamma-glutamyl compounds. The metabolism of glutathione releases free glutamate and the dipeptide cysteinyl-glycine, which is hydrolyzed to cysteine and glycine by dipeptidases. In the presence of high concentrations of dipeptides and some amino acids, can also catalyze a transpeptidation reaction, transferring the gamma-glutamyl moiety to an acceptor amino acid to form a new gamma-glutamyl compound. Initiates extracellular glutathione (GSH) breakdown, provides cells with a local cysteine supply and contributes to maintain intracellular GSH level. It is part of the cell antioxidant defense mechanism. This chain is Glutathione hydrolase proenzyme, found in Arthroderma benhamiae (strain ATCC MYA-4681 / CBS 112371) (Trichophyton mentagrophytes).